We begin with the raw amino-acid sequence, 159 residues long: NADH-quinone oxidoreductase subunit B (159 aa).

[4Fe-4S] cluster contacts are provided by Cys-37, Cys-38, Cys-102, and Cys-132.

The protein belongs to the complex I 20 kDa subunit family. NDH-1 is composed of 14 different subunits. Subunits NuoB, C, D, E, F, and G constitute the peripheral sector of the complex. It depends on [4Fe-4S] cluster as a cofactor.

Its subcellular location is the cell inner membrane. The enzyme catalyses a quinone + NADH + 5 H(+)(in) = a quinol + NAD(+) + 4 H(+)(out). Its function is as follows. NDH-1 shuttles electrons from NADH, via FMN and iron-sulfur (Fe-S) centers, to quinones in the respiratory chain. Couples the redox reaction to proton translocation (for every two electrons transferred, four hydrogen ions are translocated across the cytoplasmic membrane), and thus conserves the redox energy in a proton gradient. The sequence is that of NADH-quinone oxidoreductase subunit B from Paraburkholderia phymatum (strain DSM 17167 / CIP 108236 / LMG 21445 / STM815) (Burkholderia phymatum).